The chain runs to 184 residues: ATP synthase subunit b, chloroplastic (184 aa).

Residues leucine 27–leucine 49 form a helical membrane-spanning segment.

This sequence belongs to the ATPase B chain family. F-type ATPases have 2 components, F(1) - the catalytic core - and F(0) - the membrane proton channel. F(1) has five subunits: alpha(3), beta(3), gamma(1), delta(1), epsilon(1). F(0) has four main subunits: a(1), b(1), b'(1) and c(10-14). The alpha and beta chains form an alternating ring which encloses part of the gamma chain. F(1) is attached to F(0) by a central stalk formed by the gamma and epsilon chains, while a peripheral stalk is formed by the delta, b and b' chains.

It localises to the plastid. Its subcellular location is the chloroplast thylakoid membrane. Its function is as follows. F(1)F(0) ATP synthase produces ATP from ADP in the presence of a proton or sodium gradient. F-type ATPases consist of two structural domains, F(1) containing the extramembraneous catalytic core and F(0) containing the membrane proton channel, linked together by a central stalk and a peripheral stalk. During catalysis, ATP synthesis in the catalytic domain of F(1) is coupled via a rotary mechanism of the central stalk subunits to proton translocation. Functionally, component of the F(0) channel, it forms part of the peripheral stalk, linking F(1) to F(0). In Morus indica (Mulberry), this protein is ATP synthase subunit b, chloroplastic.